We begin with the raw amino-acid sequence, 94 residues long: Co-chaperonin GroES (94 aa).

The protein belongs to the GroES chaperonin family. Heptamer of 7 subunits arranged in a ring. Interacts with the chaperonin GroEL.

The protein localises to the cytoplasm. Its function is as follows. Together with the chaperonin GroEL, plays an essential role in assisting protein folding. The GroEL-GroES system forms a nano-cage that allows encapsulation of the non-native substrate proteins and provides a physical environment optimized to promote and accelerate protein folding. GroES binds to the apical surface of the GroEL ring, thereby capping the opening of the GroEL channel. This chain is Co-chaperonin GroES, found in Heliobacterium modesticaldum (strain ATCC 51547 / Ice1).